The sequence spans 1365 residues: ATP-dependent RNA helicase DHX29 (1365 aa).

Over residues 1 to 10 (MGGKNKKHKA) the composition is skewed to basic residues. Disordered regions lie at residues 1–74 (MGGK…NDSG), 174–222 (SQEF…EETT), and 235–257 (AEQQDEEEKGEGSKGLEEEEKFD). 2 stretches are compositionally biased toward low complexity: residues 11-36 (PGAAAMRAAVSASRARSAEAGAVGEA) and 43-53 (ARPAPAVPTGA). Residues Ser-69, Ser-190, and Ser-198 each carry the phosphoserine modification. Positions 187-203 (KFQSVQIQATLSPPQQT) are enriched in polar residues. The span at 206–222 (KRQEEDPKIKPKKEETT) shows a compositional bias: basic and acidic residues. A coiled-coil region spans residues 281 to 308 (LEKNKQGQKEAQEKIRKFQREMETLEDH). The interval 500 to 524 (QQQQQQQQRPESEKGGSEDPEESWE) is disordered. The Helicase ATP-binding domain maps to 581 to 754 (VETLKRHRVV…FTHCPILRIS (174 aa)). 594–601 (GETGSGKS) is a binding site for ATP. The DEAH box signature appears at 701–704 (DEVH). The 178-residue stretch at 848 to 1025 (LILELLVYLD…ELCLHIMKCD (178 aa)) folds into the Helicase C-terminal domain.

Belongs to the DEAD box helicase family. DEAH subfamily. In terms of assembly, part of the 43S pre-initiation complex (PIC) that contains at least Met-tRNA, EIF1, EIF1A (EIF1AX or EIF1AY), EIF2S1, EIF2S2, EIF2S3, EIF3A, EIF3B, EIF3C, EIF3D, EIF3E, EIF3F, EIF3G, EIF3H, EIF3I, EIF3J, EIF3K, EIF3L, EIF3M, DHX29 and the 40S ribosomal subunit.

The protein localises to the cytoplasm. It carries out the reaction ATP + H2O = ADP + phosphate + H(+). Functionally, ATP-binding RNA helicase involved in translation initiation. Part of the 43S pre-initiation complex that is required for efficient initiation on mRNAs of higher eukaryotes with structured 5'-UTRs by promoting efficient NTPase-dependent 48S complex formation. Specifically binds to the 40S ribosome near the mRNA entrance. Does not possess a processive helicase activity. The polypeptide is ATP-dependent RNA helicase DHX29 (Mus musculus (Mouse)).